A 914-amino-acid polypeptide reads, in one-letter code: Solute carrier family 12 member 9 (914 aa).

Over 1-36 (MASESSPLLAYRLLGEEGVALPANGAGGPGGASARK) the chain is Cytoplasmic. Ser6 carries the phosphoserine modification. The chain crosses the membrane as a helical span at residues 37–57 (LSTFLGVVVPTVLSMFSIVVF). The Extracellular portion of the chain corresponds to 58-72 (LRIGFVVGHAGLLQA). A helical membrane pass occupies residues 73–93 (LAMLLVAYFILALTVLSVCAI). Residues 94 to 119 (ATNGAVQGGGAYFMISRTLGPEVGGS) are Cytoplasmic-facing. A helical membrane pass occupies residues 120-140 (IGLMFYLANVCGCAVSLLGLV). The Extracellular segment spans residues 141–167 (ESVLDVFGADATGPSGLRVLPQGYGWN). Residues 168–188 (LLYGSLLLGLVGGVCTLGAGL) form a helical membrane-spanning segment. Topologically, residues 189–193 (YARAS) are cytoplasmic. Residues 194–214 (FLTFLLVSGSLASVLISFVAV) form a helical membrane-spanning segment. Over 215–262 (GPRDIRLTPRPGPNGSSLPPRFGHFTGFNSSTLKDNLGAGYAEDYTTG) the chain is Extracellular. N-linked (GlcNAc...) asparagine glycans are attached at residues Asn228 and Asn243. The helical transmembrane segment at 263 to 283 (AVMNFASVFAVLFNGCTGIMA) threads the bilayer. Residues 284-297 (GANMSGELKDPSRA) are Cytoplasmic-facing. A helical transmembrane segment spans residues 298-318 (IPLGTIVAVAYTFFVYVLLFF). The Extracellular segment spans residues 319–338 (LSSFTCDRTLLQEDYGFFRA). Residues 339–359 (ISLWPPLVLIGIYATALSASM) traverse the membrane as a helical segment. Residues 360 to 390 (SSLIGASRILHALARDDLFGVILAPAKVVSR) are Cytoplasmic-facing. A helical membrane pass occupies residues 391-411 (GGNPWAAVLYSWGLVQLVLLA). At 412–416 (GKLNT) the chain is on the extracellular side. The chain crosses the membrane as a helical span at residues 417-437 (LAAVVTVFYLVAYAAVDLSCL). Topologically, residues 438-466 (SLEWASAPNFRPTFSLFSWHTCLLGVASC) are cytoplasmic. The chain crosses the membrane as a helical span at residues 467–487 (LLMMFLISPGAAGGSLLLMGL). Over 488-740 (LAALLTARGG…LLRPRGGPGY (253 aa)) the chain is Extracellular. Residues 642 to 678 (LTDPAFSEPADSTREGSSPALSTLFPPPRAPGSPRAL) are disordered. A helical membrane pass occupies residues 741–761 (VDVCGLFLLQMATILGMVPAW). Topologically, residues 762–914 (HSARLRIFLC…GVTPVTCTDL (153 aa)) are cytoplasmic. The interval 844–863 (QQGRGTGGGPGGPEGGDAEG) is disordered. The span at 847-858 (RGTGGGPGGPEG) shows a compositional bias: gly residues.

This sequence belongs to the SLC12A transporter family. In terms of assembly, interacts with SLC12A1. As to expression, highly expressed in placenta, brain and kidney. Lower expression in lung, liver and heart.

It is found in the cell membrane. Its subcellular location is the lysosome membrane. Functionally, may be an inhibitor of SLC12A1. Seems to correspond to a subunit of a multimeric transport system and thus, additional subunits may be required for its function. May play a role in lysosomal ion flux and osmoregulation. The protein is Solute carrier family 12 member 9 (SLC12A9) of Homo sapiens (Human).